Reading from the N-terminus, the 926-residue chain is Probable zinc protease PqqL (926 aa).

Position 79 (His-79) interacts with Zn(2+). Glu-82 serves as the catalytic Proton acceptor. Residues His-83 and Glu-159 each coordinate Zn(2+).

The protein belongs to the peptidase M16 family. Zn(2+) is required as a cofactor.

The polypeptide is Probable zinc protease PqqL (pqqL) (Haemophilus influenzae (strain ATCC 51907 / DSM 11121 / KW20 / Rd)).